We begin with the raw amino-acid sequence, 1118 residues long: Carbamoyl phosphate synthase arginine-specific large chain (1118 aa).

The segment at 23–420 is carboxyphosphate synthetic domain; the sequence is QLVEGVNSVL…AFQKALRQVD (398 aa). Residues arginine 150, arginine 190, glycine 196, glycine 197, lysine 227, leucine 229, glutamate 234, glycine 260, valine 261, histidine 262, glutamine 303, and glutamate 317 each coordinate ATP. Residues 154 to 346 form the ATP-grasp 1 domain; sequence ASALKDINIP…LAYTAAKIGL (193 aa). The Mg(2+) site is built by glutamine 303, glutamate 317, and asparagine 319. Residues glutamine 303, glutamate 317, and asparagine 319 each contribute to the Mn(2+) site. The segment at 421 to 573 is oligomerization domain; it reads PSLLGFQGST…YTTYNATKND (153 aa). The carbamoyl phosphate synthetic domain stretch occupies residues 574–958; the sequence is VEFNENGMLV…SYWTAIQSTM (385 aa). Residues 698-890 enclose the ATP-grasp 2 domain; that stretch reads SSILDSIDVD…FIEIAVKAFL (193 aa). ATP contacts are provided by arginine 734, lysine 773, isoleucine 775, glutamate 780, glycine 805, valine 806, histidine 807, serine 808, glutamine 848, and glutamate 861. Mg(2+)-binding residues include glutamine 848, glutamate 861, and asparagine 863. Residues glutamine 848, glutamate 861, and asparagine 863 each contribute to the Mn(2+) site. The segment at 959-1102 is allosteric domain; that stretch reads NFHVPLPPSG…KILESHDVIV (144 aa). Positions 960–1118 constitute an MGS-like domain; it reads FHVPLPPSGI…WDEFIGFKAY (159 aa).

It belongs to the CarB family. As to quaternary structure, heterodimer composed of 2 chains; the small (or glutamine) chain promotes the hydrolysis of glutamine to ammonia, which is used by the large (or ammonia) chain to synthesize carbamoyl phosphate. The cofactor is Mg(2+). Requires Mn(2+) as cofactor.

The protein localises to the cytoplasm. It catalyses the reaction hydrogencarbonate + L-glutamine + 2 ATP + H2O = carbamoyl phosphate + L-glutamate + 2 ADP + phosphate + 2 H(+). It carries out the reaction hydrogencarbonate + NH4(+) + 2 ATP = carbamoyl phosphate + 2 ADP + phosphate + 2 H(+). It participates in amino-acid biosynthesis; L-arginine biosynthesis; carbamoyl phosphate from bicarbonate: step 1/1. Functionally, large subunit of the arginine-specific carbamoyl phosphate synthase (CPSase). CPSase catalyzes the formation of carbamoyl phosphate from the ammonia moiety of glutamine, hydrogencarbonate, and phosphate donated by ATP, constituting the first step of 2 biosynthetic pathways, one leading to arginine and/or urea and the other to pyrimidine nucleotides. The large subunit (synthetase) binds the substrates ammonia (free or transferred from glutamine from the small subunit), hydrogencarbonate and ATP and carries out an ATP-coupled ligase reaction, activating hydrogencarbonate by forming carboxy phosphate which reacts with ammonia to form carbamoyl phosphate. This is Carbamoyl phosphate synthase arginine-specific large chain (CPA2) from Saccharomyces cerevisiae (strain ATCC 204508 / S288c) (Baker's yeast).